Reading from the N-terminus, the 287-residue chain is Kit ligand (287 aa).

An N-terminal signal peptide occupies residues 1-25; that stretch reads MKKAQTWIITCFCLQLLLLNPLVKT. Topologically, residues 26–225 are extracellular; the sequence is QSSCGNPVTD…LGFISSSSLQ (200 aa). Intrachain disulfides connect Cys29–Cys117 and Cys68–Cys167. 6 N-linked (GlcNAc...) asparagine glycosylation sites follow: Asn100, Asn106, Asn149, Asn178, Asn200, and Asn206. Residues 226 to 246 form a helical membrane-spanning segment; the sequence is GISIALTSLLSLLIGFILGVI. Residues 247–287 lie on the Cytoplasmic side of the membrane; sequence YWKKTHPKSRPESNETTQCHGCQEENEISMLQQKEKEHLQV.

The protein belongs to the SCF family. In terms of assembly, homodimer, non-covalently linked. A soluble form is produced by proteolytic processing of isoform 1 in the extracellular domain.

It localises to the cell membrane. The protein resides in the secreted. It is found in the cytoplasm. Its subcellular location is the cytoskeleton. The protein localises to the cell projection. It localises to the lamellipodium. The protein resides in the filopodium. Functionally, ligand for the receptor-type protein-tyrosine kinase KIT. Plays an essential role in the regulation of cell survival and proliferation, hematopoiesis, stem cell maintenance, gametogenesis, mast cell development, migration and function, and in melanogenesis. KITLG/SCF binding can activate several signaling pathways. Acts synergistically with other cytokines, probably interleukins. The sequence is that of Kit ligand (KITLG) from Coturnix japonica (Japanese quail).